We begin with the raw amino-acid sequence, 623 residues long: Chaperone protein DnaK (623 aa).

A Phosphothreonine; by autocatalysis modification is found at threonine 175. The interval 580-623 (PEGAQGAGFDPNNMGGANAGNASAGNDKKDDNVVDADFKVEDDK) is disordered. Residues 591-604 (NNMGGANAGNASAG) show a composition bias toward low complexity. The span at 605-623 (NDKKDDNVVDADFKVEDDK) shows a compositional bias: basic and acidic residues.

The protein belongs to the heat shock protein 70 family.

Acts as a chaperone. This Clostridium botulinum (strain Hall / ATCC 3502 / NCTC 13319 / Type A) protein is Chaperone protein DnaK.